The primary structure comprises 86 residues: Acyl carrier protein (86 aa).

The Carrier domain occupies 10–85 (DKIEQKVIEM…DVIQYIKERQ (76 aa)). Ser45 carries the O-(pantetheine 4'-phosphoryl)serine modification.

Belongs to the acyl carrier protein (ACP) family. 4'-phosphopantetheine is transferred from CoA to a specific serine of apo-ACP by AcpS. This modification is essential for activity because fatty acids are bound in thioester linkage to the sulfhydryl of the prosthetic group.

It is found in the cytoplasm. The protein operates within lipid metabolism; fatty acid biosynthesis. Its function is as follows. Carrier of the growing fatty acid chain in fatty acid biosynthesis. The chain is Acyl carrier protein from Rickettsia canadensis (strain McKiel).